Reading from the N-terminus, the 387-residue chain is (S)-8-oxocitronellyl enol synthase (387 aa).

NADP(+) contacts are provided by residues 36-38 (TGI), 64-65 (RR), 82-83 (DI), 106-107 (SW), and Q140. Active-site residues include K144 and Y177. Substrate-binding residues include K144 and Y177. Residues Y177 and 211–213 (SMM) each bind NADP(+).

The protein belongs to the short-chain dehydrogenases/reductases (SDR) family. Highly divergent. Expressed in leaves.

The catalysed reaction is (S)-8-oxocitronellyl enol + NADP(+) = (6E)-8-oxogeranial + NADPH + H(+). It carries out the reaction (S)-8-oxocitronellyl enol + NAD(+) = (6E)-8-oxogeranial + NADH + H(+). The enzyme catalyses (R)-8-oxocitronellyl enol + NADP(+) = (6E)-8-oxogeranial + NADPH + H(+). Its function is as follows. Iridoid synthase that catalyzes the first step in generation of the iridoid ring scaffold using the linear monoterpene (6E)-8-oxogeranial as substrate. Reduces 8-oxogeranial, generating an unstable product that is subsequently cyclized into several possible products, either non-enzymically or by dedicated cyclases. Iridoids comprise a large family of distinctive bicyclic monoterpenes that possess a wide range of pharmacological activities, including anticancer, anti-inflammatory, antifungal and antibacterial activities. The chain is (S)-8-oxocitronellyl enol synthase from Antirrhinum majus (Garden snapdragon).